Reading from the N-terminus, the 303-residue chain is Diaminopimelate epimerase (303 aa).

N15, Q47, and N67 together coordinate substrate. C76 functions as the Proton donor in the catalytic mechanism. Substrate is bound by residues 77–78, N163, N197, and 215–216; these read GN and ER. Catalysis depends on C224, which acts as the Proton acceptor. 225 to 226 contributes to the substrate binding site; that stretch reads GS. Residues 278–303 form a disordered region; it reads FDPATGEWSRDTQGLQGSGNADRGAA.

This sequence belongs to the diaminopimelate epimerase family. Homodimer.

Its subcellular location is the cytoplasm. The enzyme catalyses (2S,6S)-2,6-diaminopimelate = meso-2,6-diaminopimelate. It participates in amino-acid biosynthesis; L-lysine biosynthesis via DAP pathway; DL-2,6-diaminopimelate from LL-2,6-diaminopimelate: step 1/1. Its function is as follows. Catalyzes the stereoinversion of LL-2,6-diaminopimelate (L,L-DAP) to meso-diaminopimelate (meso-DAP), a precursor of L-lysine and an essential component of the bacterial peptidoglycan. This Brucella abortus (strain S19) protein is Diaminopimelate epimerase.